Reading from the N-terminus, the 522-residue chain is MSEAEPVGEKGPAEDDGEESVPFNPFLHEFEPEGFWQKARFYILGFTLFPLRFLLAAIFLFLMWPIAALRVAGLTEEELSRSIRHRRTILHHLIYLLSRTMFFMCGFHWITIRGRRAPASEAPLLVVAPHSTFFDPIVTVVCDLPSVVSRVENLNIPVIGALLRFNQSILVSRQDPSSRKKVVEEVKKRATSNGDWPQVLFFPEGTNGNGKVLLKFKPGAFVAGVPVQPVLMRYPNKLPATIWTWKGNGVFKVLWLTMSQFYINLEIEFLPVYHPTAEERADPTLYASKVQKIMADALAKPATEFELIGDTPVTPVGHLKVALDPKIWELGNILEKAGFSLDSVQGLIDLCLEGVCSRVGLDELAEKLGVTQHDVISRVFNYFHKDASGMIDFREVSLVLAAQDATRSAEELAKLAFDLFSTCDADGRFLLSADGFAAILRSVVGSPPAESGKVFSELCTYTELHGLTQDGFVRFAIRHPCYRHLFLFYLRPPSSGRRKPPHIQQNGGCSGKNNPRNQSKMD.

2 consecutive transmembrane segments (helical) span residues 43-63 (ILGF…LFLM) and 92-112 (HLIY…WITI). The HXXXXD motif motif lies at 130-135 (HSTFFD). N166 and N517 each carry an N-linked (GlcNAc...) asparagine glycan. Residues 496–522 (GRRKPPHIQQNGGCSGKNNPRNQSKMD) are disordered. Polar residues predominate over residues 503 to 522 (IQQNGGCSGKNNPRNQSKMD).

It belongs to the 1-acyl-sn-glycerol-3-phosphate acyltransferase family.

It is found in the endoplasmic reticulum membrane. It catalyses the reaction a 1-acyl-sn-glycero-3-phosphoethanolamine + an acyl-CoA = a 1,2-diacyl-sn-glycero-3-phosphoethanolamine + CoA. It carries out the reaction a 1-O-(1Z-alkenyl)-sn-glycero-3-phosphoethanolamine + an acyl-CoA = a 1-O-(1Z-alkenyl)-2-acyl-sn-glycero-3-phosphoethanolamine + CoA. The catalysed reaction is a 1-acyl-sn-glycero-3-phosphocholine + an acyl-CoA = a 1,2-diacyl-sn-glycero-3-phosphocholine + CoA. The enzyme catalyses a 1-O-alkyl-sn-glycero-3-phosphocholine + acetyl-CoA = a 1-O-alkyl-2-acetyl-sn-glycero-3-phosphocholine + CoA. It catalyses the reaction a 1-acyl-sn-glycero-3-phospho-L-serine + an acyl-CoA = a 1,2-diacyl-sn-glycero-3-phospho-L-serine + CoA. The protein operates within lipid metabolism; phospholipid metabolism. Functionally, displays acyl-CoA-dependent lysophospholipid acyltransferase activity with a subset of lysophospholipids as substrates. Prefers long chain acyl-CoAs (C16, C18) as acyl donors. This is Lysophospholipid acyltransferase LPCAT4 (lpcat4) from Xenopus tropicalis (Western clawed frog).